Consider the following 207-residue polypeptide: Porin MspD (207 aa).

An N-terminal signal peptide occupies residues 1–24; the sequence is MRYLVMMFALLVSVTLVSPRPANA.

Belongs to the mycobacterial porin (TC 1.B.24) family. Octamers. Probably forms a goblet with the wide end on the exterior of the outer membrane and a central channel. It is not known if mixed oligomers of MspD with other Msp subunits form in vivo.

The protein localises to the cell outer membrane. It is found in the secreted. Its subcellular location is the cell wall. Functionally, a backup porin induced when MspA, the major porin, is deleted. It probably forms a water-filled channel which favors the permeation of cations. There are about 2400 porins in wild-type, 800 in an mspA deletion and 150 in a double mspA-mspC deletion. The polypeptide is Porin MspD (mspD) (Mycolicibacterium smegmatis (strain ATCC 700084 / mc(2)155) (Mycobacterium smegmatis)).